The sequence spans 277 residues: Myelin proteolipid protein (277 aa).

Topologically, residues 2 to 10 (GLLECCARC) are cytoplasmic. 3 S-palmitoyl cysteine lipidation sites follow: Cys-6, Cys-7, and Cys-10. A helical transmembrane segment spans residues 11 to 36 (LIGAPFASLVATGLCFFGVALFCGCG). Topologically, residues 37–59 (HEALTGTEQLIETYFSKNYQDYE) are extracellular. Residues 60–88 (FLIDVIHGFQYFIYGTAAFFFLYGALLLA) traverse the membrane as a helical segment. Residues 89-151 (EGFYTTGAVR…LGKWLGHPDK (63 aa)) are Cytoplasmic-facing. S-palmitoyl cysteine attachment occurs at residues Cys-109, Cys-139, and Cys-141. Residues 152-178 (FVGITYVLTIIWLLVFACSAVPVYIYF) form a helical membrane-spanning segment. At 179–238 (NTWTTCQSIGNPTKTSASIGTLCADARMYGILPWNAFPGKVCGSNLLSICKTSEFQMTFH) the chain is on the extracellular side. 2 disulfide bridges follow: Cys-184-Cys-228 and Cys-201-Cys-220. Thr-199 carries the O-palmitoyl threonine lipid modification. A helical membrane pass occupies residues 239–268 (LFIAAFVGAAATLVSLVTFIIATTYNFAVL). The Cytoplasmic segment spans residues 269–277 (RLMGRGTKF).

The protein belongs to the myelin proteolipid protein family.

The protein localises to the cell membrane. Functionally, this is the major myelin protein from the central nervous system. It plays an important role in the formation or maintenance of the multilamellar structure of myelin. The sequence is that of Myelin proteolipid protein (PLP1) from Taeniopygia guttata (Zebra finch).